A 454-amino-acid chain; its full sequence is UPF0210 protein BLA_0552 (454 aa).

This sequence belongs to the UPF0210 family. As to quaternary structure, homodimer.

This chain is UPF0210 protein BLA_0552, found in Bifidobacterium animalis subsp. lactis (strain AD011).